The primary structure comprises 127 residues: Large ribosomal subunit protein bL17 (127 aa).

The protein belongs to the bacterial ribosomal protein bL17 family. In terms of assembly, part of the 50S ribosomal subunit. Contacts protein L32.

The sequence is that of Large ribosomal subunit protein bL17 from Lactobacillus delbrueckii subsp. bulgaricus (strain ATCC 11842 / DSM 20081 / BCRC 10696 / JCM 1002 / NBRC 13953 / NCIMB 11778 / NCTC 12712 / WDCM 00102 / Lb 14).